The sequence spans 206 residues: Ubiquitin-conjugating enzyme E2 S (206 aa).

The 147-residue stretch at 14–160 (QTIRQVMKEL…ARMMTEIHAQ (147 aa)) folds into the UBC core domain. Residue Cys-98 is the Glycyl thioester intermediate of the active site. The segment at 165-191 (GVSDAKDDDGPSNKKHAGLDKKLQDKK) is disordered. Basic and acidic residues predominate over residues 168 to 191 (DAKDDDGPSNKKHAGLDKKLQDKK).

The protein belongs to the ubiquitin-conjugating enzyme family.

The enzyme catalyses S-ubiquitinyl-[E1 ubiquitin-activating enzyme]-L-cysteine + [E2 ubiquitin-conjugating enzyme]-L-cysteine = [E1 ubiquitin-activating enzyme]-L-cysteine + S-ubiquitinyl-[E2 ubiquitin-conjugating enzyme]-L-cysteine.. The protein operates within protein modification; protein ubiquitination. Functionally, catalyzes the covalent attachment of ubiquitin to other proteins. Acts as an essential factor of the anaphase promoting complex/cyclosome (APC/C), a cell cycle-regulated ubiquitin ligase that controls progression through mitosis. Acts by specifically elongating polyubiquitin chains initiated by the E2 enzyme vih/UbcH10 on APC/C substrates, enhancing the degradation of APC/C substrates by the proteasome and promoting mitotic exit. The polypeptide is Ubiquitin-conjugating enzyme E2 S (Drosophila mojavensis (Fruit fly)).